The sequence spans 369 residues: 3 beta-hydroxysteroid dehydrogenase type 7 (369 aa).

The Proton acceptor role is filled by Tyr159. Lys163 contributes to the NAD(+) binding site. Transmembrane regions (helical) follow at residues 289–309 and 312–334; these read LLPYWLLVLLATLNALLQWLL and LVLYTPLLNPYTLAMANTTFTVS.

The protein belongs to the 3-beta-HSD family. Predominantly expressed in liver.

It localises to the endoplasmic reticulum membrane. It carries out the reaction 7alpha-hydroxycholesterol + NAD(+) = 7alpha-hydroxycholest-4-en-3-one + NADH + H(+). The catalysed reaction is 7alpha,25-dihydroxycholesterol + NAD(+) = 7alpha,25-dihydroxy-4-cholesten-3-one + NADH + H(+). It catalyses the reaction (25R)-cholest-5-en-3beta,7alpha,26-triol + NAD(+) = (25R)-7alpha,26-dihydroxycholest-4-en-3-one + NADH + H(+). The enzyme catalyses (24S)-7alpha-dihydroxycholesterol + NAD(+) = (24S)-7alpha,24-dihydroxycholest-4-en-3-one + NADH + H(+). The protein operates within lipid metabolism; steroid biosynthesis. In terms of biological role, the 3-beta-HSD enzymatic system plays a crucial role in the biosynthesis of all classes of hormonal steroids. HSD VII is active against four 7-alpha-hydroxylated sterols. Does not metabolize several different C(19/21) steroids as substrates. Involved in bile acid synthesis. Plays a key role in cell positioning and movement in lymphoid tissues by mediating degradation of 7-alpha,25-dihydroxycholesterol (7-alpha,25-OHC): 7-alpha,25-OHC acts as a ligand for the G protein-coupled receptor GPR183/EBI2, a chemotactic receptor for a number of lymphoid cells. This is 3 beta-hydroxysteroid dehydrogenase type 7 from Mus musculus (Mouse).